A 322-amino-acid chain; its full sequence is Secreted RxLR effector protein RXLR-C17 (322 aa).

Positions 1–25 are cleaved as a signal peptide; that stretch reads MREPAFSFRLHLFAAMILLVDVFSA. The short motif at 43-62 is the RxLR-dEER element; the sequence is RQLRARDSQAKNYVIRDEER. A glycan (N-linked (GlcNAc...) asparagine) is linked at Asn-73.

It belongs to the RxLR effector family.

It is found in the secreted. It localises to the host cytoplasm. Its subcellular location is the host nucleus. Its function is as follows. Secreted effector that suppresses pattern-triggered immunity (PTI) in plant host. In Plasmopara halstedii (Downy mildew of sunflower), this protein is Secreted RxLR effector protein RXLR-C17.